The chain runs to 262 residues: Adenosylcobinamide-GDP ribazoletransferase (262 aa).

Helical transmembrane passes span 4–21 (AWSGFLLSVQFLTVIPIR), 37–57 (AFPLVGALIGVIEAVTYFIFS), 62–82 (LSPLFLALSLMWLSIWIAGGL), 112–132 (VGAFAVLSILCLLSFRFLFVF), 141–161 (IFLISVIPLLSRTAMAWLLIY), 181–201 (YDAHVAMIIGNCLLACLCAIH), 202–222 (FSVWKTVIFLACGTIFAVFVA), and 236–256 (DALGAFVEGVETWLWCMIWLL).

The protein belongs to the CobS family. Requires Mg(2+) as cofactor.

The protein resides in the cell membrane. It catalyses the reaction alpha-ribazole + adenosylcob(III)inamide-GDP = adenosylcob(III)alamin + GMP + H(+). The catalysed reaction is alpha-ribazole 5'-phosphate + adenosylcob(III)inamide-GDP = adenosylcob(III)alamin 5'-phosphate + GMP + H(+). It functions in the pathway cofactor biosynthesis; adenosylcobalamin biosynthesis; adenosylcobalamin from cob(II)yrinate a,c-diamide: step 7/7. Joins adenosylcobinamide-GDP and alpha-ribazole to generate adenosylcobalamin (Ado-cobalamin). Also synthesizes adenosylcobalamin 5'-phosphate from adenosylcobinamide-GDP and alpha-ribazole 5'-phosphate. This chain is Adenosylcobinamide-GDP ribazoletransferase, found in Geobacillus sp. (strain WCH70).